The sequence spans 79 residues: Translational regulator CsrA (79 aa).

This sequence belongs to the CsrA/RsmA family. In terms of assembly, homodimer; the beta-strands of each monomer intercalate to form a hydrophobic core, while the alpha-helices form wings that extend away from the core.

It localises to the cytoplasm. In terms of biological role, a translational regulator that binds mRNA to regulate translation initiation and/or mRNA stability. Usually binds in the 5'-UTR at or near the Shine-Dalgarno sequence preventing ribosome-binding, thus repressing translation. Its main target seems to be the major flagellin gene, while its function is anatagonized by FliW. The polypeptide is Translational regulator CsrA (Shouchella clausii (strain KSM-K16) (Alkalihalobacillus clausii)).